We begin with the raw amino-acid sequence, 94 residues long: MKHDPQFRALTPKWHQGYRFQYEPAQKAHVVLYPEGMIKLNESAALIGGLIDGKRTIAAIIDELHQQFPNVPELGMDVDEFMEGAKKKNWIDLV.

This sequence belongs to the PqqD family. Monomer. Interacts with PqqE.

It functions in the pathway cofactor biosynthesis; pyrroloquinoline quinone biosynthesis. Its function is as follows. Functions as a PqqA binding protein and presents PqqA to PqqE, in the pyrroloquinoline quinone (PQQ) biosynthetic pathway. The polypeptide is PqqA binding protein (Pseudomonas syringae pv. syringae (strain B728a)).